The sequence spans 488 residues: V-type proton ATPase subunit B 1 (488 aa).

The protein belongs to the ATPase alpha/beta chains family. As to quaternary structure, V-ATPase is a heteromultimeric enzyme composed of a peripheral catalytic V1 complex (main components: subunits A, B, C, D, E, and F) attached to an integral membrane V0 proton pore complex (main component: the proteolipid protein).

In terms of biological role, non-catalytic subunit of the peripheral V1 complex of vacuolar ATPase. V-ATPase is responsible for acidifying a variety of intracellular compartments in eukaryotic cells. This Gossypium hirsutum (Upland cotton) protein is V-type proton ATPase subunit B 1.